The following is a 193-amino-acid chain: Acyl carrier protein phosphodiesterase (193 aa).

The protein belongs to the AcpH family.

The catalysed reaction is holo-[ACP] + H2O = apo-[ACP] + (R)-4'-phosphopantetheine + H(+). In terms of biological role, converts holo-ACP to apo-ACP by hydrolytic cleavage of the phosphopantetheine prosthetic group from ACP. This chain is Acyl carrier protein phosphodiesterase, found in Salmonella choleraesuis (strain SC-B67).